We begin with the raw amino-acid sequence, 342 residues long: Cilia- and flagella-associated protein 36 (342 aa).

Ser-85 and Ser-147 each carry phosphoserine. A coiled-coil region spans residues 150-187 (EHEEMKILREVLRKSKEEYDQEEERKRKKQLSEAKTEE). Residues 166 to 194 (EEYDQEEERKRKKQLSEAKTEEPTVHSSE) form a disordered region. Positions 179-189 (QLSEAKTEEPT) are enriched in basic and acidic residues. Ser-201 is modified (phosphoserine). 2 disordered regions span residues 229 to 250 (RKVERSETSSLPQKDLKIPGLE) and 282 to 322 (KLMS…AEEK). 2 stretches are compositionally biased toward basic and acidic residues: residues 282–292 (KLMSMRKDMRT) and 300–322 (QKGKPTGEVEEMTEKPEMTAEEK).

This sequence belongs to the CFAP36 family. In terms of assembly, interacts with ARL3. Expressed in several human tissues including brain, testis, heart, lung, pancreas and spleen (at protein level).

The protein resides in the nucleus. It is found in the cytoplasm. It localises to the cell projection. The protein localises to the cilium. Its subcellular location is the flagellum. May act as an effector for ARL3. This is Cilia- and flagella-associated protein 36 (CFAP36) from Homo sapiens (Human).